Consider the following 709-residue polypeptide: Polyribonucleotide nucleotidyltransferase (709 aa).

Residues Asp-487 and Asp-493 each coordinate Mg(2+). Residues 554–613 form the KH domain; the sequence is PRIHTMKISSDKIKDVIGKGGAVIRALCEETGTTIEIEDDGTIKIAATEGAAAKEAIRRI. An S1 motif domain is found at 623-691; it reads GKIYTGKVMR…RQGRIRLSIK (69 aa).

The protein belongs to the polyribonucleotide nucleotidyltransferase family. As to quaternary structure, component of the RNA degradosome, which is a multiprotein complex involved in RNA processing and mRNA degradation. Requires Mg(2+) as cofactor.

It is found in the cytoplasm. The catalysed reaction is RNA(n+1) + phosphate = RNA(n) + a ribonucleoside 5'-diphosphate. Its function is as follows. Involved in mRNA degradation. Catalyzes the phosphorolysis of single-stranded polyribonucleotides processively in the 3'- to 5'-direction. This is Polyribonucleotide nucleotidyltransferase from Aliivibrio fischeri (strain ATCC 700601 / ES114) (Vibrio fischeri).